The chain runs to 446 residues: Phosphoglucosamine mutase (446 aa).

The active-site Phosphoserine intermediate is the S99. Mg(2+) contacts are provided by S99, D242, D244, and D246. A Phosphoserine modification is found at S99.

Belongs to the phosphohexose mutase family. Requires Mg(2+) as cofactor. In terms of processing, activated by phosphorylation.

The enzyme catalyses alpha-D-glucosamine 1-phosphate = D-glucosamine 6-phosphate. In terms of biological role, catalyzes the conversion of glucosamine-6-phosphate to glucosamine-1-phosphate. In Campylobacter hominis (strain ATCC BAA-381 / DSM 21671 / CCUG 45161 / LMG 19568 / NCTC 13146 / CH001A), this protein is Phosphoglucosamine mutase.